Here is a 414-residue protein sequence, read N- to C-terminus: Multifunctional CCA protein (414 aa).

Positions 8 and 11 each coordinate ATP. CTP contacts are provided by G8 and R11. The Mg(2+) site is built by D21 and D23. Residues R91, R137, and R140 each coordinate ATP. The CTP site is built by R91, R137, and R140. An HD domain is found at T228–W329.

The protein belongs to the tRNA nucleotidyltransferase/poly(A) polymerase family. Bacterial CCA-adding enzyme type 1 subfamily. In terms of assembly, monomer. Can also form homodimers and oligomers. Requires Mg(2+) as cofactor. Ni(2+) is required as a cofactor.

It carries out the reaction a tRNA precursor + 2 CTP + ATP = a tRNA with a 3' CCA end + 3 diphosphate. It catalyses the reaction a tRNA with a 3' CCA end + 2 CTP + ATP = a tRNA with a 3' CCACCA end + 3 diphosphate. Catalyzes the addition and repair of the essential 3'-terminal CCA sequence in tRNAs without using a nucleic acid template. Adds these three nucleotides in the order of C, C, and A to the tRNA nucleotide-73, using CTP and ATP as substrates and producing inorganic pyrophosphate. tRNA 3'-terminal CCA addition is required both for tRNA processing and repair. Also involved in tRNA surveillance by mediating tandem CCA addition to generate a CCACCA at the 3' terminus of unstable tRNAs. While stable tRNAs receive only 3'-terminal CCA, unstable tRNAs are marked with CCACCA and rapidly degraded. This Serratia proteamaculans (strain 568) protein is Multifunctional CCA protein.